A 400-amino-acid chain; its full sequence is tRNA pseudouridine synthase Pus10 (400 aa).

In terms of domain architecture, THUMP spans 77–194; that stretch reads QVYVELFGSP…DGSVSVQPRR (118 aa). Tyr301 is a substrate binding site.

It belongs to the pseudouridine synthase Pus10 family.

The catalysed reaction is uridine(54) in tRNA = pseudouridine(54) in tRNA. It carries out the reaction uridine(55) in tRNA = pseudouridine(55) in tRNA. Functionally, responsible for synthesis of pseudouridine from uracil-54 and uracil-55 in the psi GC loop of transfer RNAs. This Acidilobus saccharovorans (strain DSM 16705 / JCM 18335 / VKM B-2471 / 345-15) protein is tRNA pseudouridine synthase Pus10.